Here is a 257-residue protein sequence, read N- to C-terminus: MLIQNTIFYSQEWRWAKFIKFLISQLDNYHCVEHKIASDFSYKESSYGSKKSKKNINLFTWGATHQKRINFARAVCINSPNYSVLNFLIIPKTSYNIPFLGVDFVSLPTSHLLVLDFQPSLKVENQFNSELLEQIIKLKKSCHSSLPVAEKMSEDVAKFFSPGLIWSRLAKHQDSDNLIENQLYDSFKEYLNLYLKTLFESEEVGHGLQQELINGQNDYLNYRRDNDPARPMLSSLFGKDFTESLINKVLFSTNKVL.

This sequence belongs to the HY2 family.

The catalysed reaction is (3Z)-phycoerythrobilin + oxidized 2[4Fe-4S]-[ferredoxin] = 15,16-dihydrobiliverdin + reduced 2[4Fe-4S]-[ferredoxin] + 2 H(+). In terms of biological role, catalyzes the two-electron reduction of the C2 and C3(1) diene system of 15,16-dihydrobiliverdin. This chain is Phycoerythrobilin:ferredoxin oxidoreductase (pebB), found in Prochlorococcus marinus subsp. pastoris (strain CCMP1986 / NIES-2087 / MED4).